Here is a 1023-residue protein sequence, read N- to C-terminus: Transmembrane protein 132A (1023 aa).

Residues 1–35 form the signal peptide; sequence MCARMAGRTTAAPRGPYGPWLCLLVALALDVVRVD. At 36–852 the chain is on the extracellular side; it reads CGQAPLDPVY…VTELELGMYA (817 aa). Residues 212–246 form a disordered region; that stretch reads AAEGPGGCGSGEENDPGEQALPVGGVELRPADPPQ. The N-linked (GlcNAc...) asparagine glycan is linked to Asn-280. 2 disordered regions span residues 512 to 533 and 766 to 839; these read WRVP…DEAE and LPPA…MVPA. A compositionally biased stretch (low complexity) spans 515 to 527; that stretch reads PGPAEGPAEPAAE. Position 529 is a phosphoserine; by FAM20C (Ser-529). The interval 611–916 is binds to HSPA5/GRP78; it reads IEVRSPLSDS…RQLDRQSPGP (306 aa). A confers cellular localization similar to full-length form region spans residues 671-1023; it reads LPAPKQEVAL…NYMERIRGSS (353 aa). The span at 778–790 shows a compositional bias: low complexity; it reads SSPAWSPPATEAT. A compositionally biased stretch (basic and acidic residues) spans 809 to 823; the sequence is GKFERAEEEARKEET. Over residues 824 to 836 the composition is skewed to acidic residues; the sequence is EAREEEEEEEEEM. The chain crosses the membrane as a helical span at residues 853-873; the sequence is LLGVFCVAIFIFLVNGVVFVL. Residues 874–1023 lie on the Cytoplasmic side of the membrane; the sequence is RYQRKEPPDS…NYMERIRGSS (150 aa). Residues 905–961 form a disordered region; that stretch reads LSRQLDRQSPGPPKGEGSCPCESGGGGEAPTLAPGPPGGTTSSSSTLARKEAGGRRK.

It belongs to the TMEM132 family. Interacts with HSPA5/GRP78.

It localises to the golgi apparatus membrane. The protein resides in the endoplasmic reticulum membrane. Its function is as follows. May play a role in embryonic and postnatal development of the brain. Increased resistance to cell death induced by serum starvation in cultured cells. Regulates cAMP-induced GFAP gene expression via STAT3 phosphorylation. This is Transmembrane protein 132A (TMEM132A) from Homo sapiens (Human).